We begin with the raw amino-acid sequence, 107 residues long: DNA-directed RNA polymerase subunit omega (107 aa).

The interval 81–107 (MEEEAAKGNADAGQGEGDAPKTPGQDG) is disordered.

It belongs to the RNA polymerase subunit omega family. In terms of assembly, the RNAP catalytic core consists of 2 alpha, 1 beta, 1 beta' and 1 omega subunit. When a sigma factor is associated with the core the holoenzyme is formed, which can initiate transcription.

It catalyses the reaction RNA(n) + a ribonucleoside 5'-triphosphate = RNA(n+1) + diphosphate. Its function is as follows. Promotes RNA polymerase assembly. Latches the N- and C-terminal regions of the beta' subunit thereby facilitating its interaction with the beta and alpha subunits. This Alkalilimnicola ehrlichii (strain ATCC BAA-1101 / DSM 17681 / MLHE-1) protein is DNA-directed RNA polymerase subunit omega.